The primary structure comprises 150 residues: Avidin-related protein 1 (150 aa).

The signal sequence occupies residues 1 to 24; it reads MVHATSPLLLLLLLSLALVAPGLS. An Avidin-like domain is found at 26–147; that stretch reads RKCSLTGKWD…GNNDFTRQRT (122 aa). The cysteines at positions 28 and 105 are disulfide-linked. The biotin site is built by Asn-36 and Ser-40. Asn-54 carries N-linked (GlcNAc...) asparagine glycosylation. Residues Tyr-57, Thr-59, and Asp-63 each contribute to the biotin site. N-linked (GlcNAc...) asparagine glycosylation is found at Asn-67 and Asn-93. 3 residues coordinate biotin: Ser-95, Ser-99, and Asn-140.

This sequence belongs to the avidin/streptavidin family. Homotetramer. Post-translationally, glycosylated.

The protein resides in the secreted. Functionally, forms a strong non-covalent specific complex with biotin. The chain is Avidin-related protein 1 (AVR1) from Gallus gallus (Chicken).